The sequence spans 126 residues: Arginine decarboxylase proenzyme (126 aa).

Ser74 acts as the Schiff-base intermediate with substrate; via pyruvic acid in catalysis. Ser74 carries the pyruvic acid (Ser); by autocatalysis modification. His79 serves as the catalytic Proton acceptor; for processing activity. Catalysis depends on Cys94, which acts as the Proton donor; for catalytic activity.

This sequence belongs to the prokaryotic AdoMetDC family. Type 1 subfamily. In terms of assembly, heterooctamer of four alpha and four beta chains arranged as a tetramer of alpha/beta heterodimers. Pyruvate is required as a cofactor. Is synthesized initially as an inactive proenzyme. Formation of the active enzyme involves a self-maturation process in which the active site pyruvoyl group is generated from an internal serine residue via an autocatalytic post-translational modification. Two non-identical subunits are generated from the proenzyme in this reaction, and the pyruvate is formed at the N-terminus of the alpha chain, which is derived from the carboxyl end of the proenzyme. The post-translation cleavage follows an unusual pathway, termed non-hydrolytic serinolysis, in which the side chain hydroxyl group of the serine supplies its oxygen atom to form the C-terminus of the beta chain, while the remainder of the serine residue undergoes an oxidative deamination to produce ammonia and the pyruvoyl group blocking the N-terminus of the alpha chain.

It catalyses the reaction L-arginine + H(+) = agmatine + CO2. Its pathway is amine and polyamine biosynthesis; agmatine biosynthesis; agmatine from L-arginine: step 1/1. Specifically catalyzes the decarboxylation of L-arginine to agmatine. Has no S-adenosylmethionine decarboxylase (AdoMetDC) activity. The polypeptide is Arginine decarboxylase proenzyme (Pyrobaculum islandicum (strain DSM 4184 / JCM 9189 / GEO3)).